The sequence spans 250 residues: 2,3-bisphosphoglycerate-dependent phosphoglycerate mutase (250 aa).

Substrate contacts are provided by residues 10–17 (RHGESQWN), 23–24 (TG), Arg62, 89–92 (ERHY), Lys100, 116–117 (RR), and 185–186 (GN). His11 acts as the Tele-phosphohistidine intermediate in catalysis. Glu89 serves as the catalytic Proton donor/acceptor.

This sequence belongs to the phosphoglycerate mutase family. BPG-dependent PGAM subfamily. In terms of assembly, homodimer.

The catalysed reaction is (2R)-2-phosphoglycerate = (2R)-3-phosphoglycerate. It participates in carbohydrate degradation; glycolysis; pyruvate from D-glyceraldehyde 3-phosphate: step 3/5. Its function is as follows. Catalyzes the interconversion of 2-phosphoglycerate and 3-phosphoglycerate. The chain is 2,3-bisphosphoglycerate-dependent phosphoglycerate mutase from Shigella dysenteriae serotype 1 (strain Sd197).